The chain runs to 348 residues: uncharacterized protein (348 aa).

This is an uncharacterized protein from Aquifex aeolicus (strain VF5).